Reading from the N-terminus, the 121-residue chain is uncharacterized protein (121 aa).

2 consecutive transmembrane segments (helical) span residues 26–46 (FIALFDFPLLFIYFPFLILVL) and 72–92 (AFLTHEECGLVLQYIYYWLGL).

It is found in the membrane. This is an uncharacterized protein from Saccharomyces cerevisiae (strain ATCC 204508 / S288c) (Baker's yeast).